The chain runs to 109 residues: Irditoxin subunit A (109 aa).

Residues 1–19 form the signal peptide; that stretch reads MKTLLLAVAVVAFVCLGSA. Positions 20–34 are excised as a propeptide; it reads DQLGLGRQQIDWGQG. The residue at position 35 (Gln-35) is a Pyrrolidone carboxylic acid. 5 disulfide bridges follow: Cys-44–Cys-66, Cys-47–Cys-55, Cys-61–Cys-85, Cys-89–Cys-100, and Cys-101–Cys-106.

It belongs to the three-finger toxin family. Ancestral subfamily. Boigatoxin sub-subfamily. As to quaternary structure, heterodimer of A and B chains; disulfide-linked. As to expression, expressed by the venom gland.

The protein localises to the secreted. In terms of biological role, this bird and reptile-specific postsynaptic neurotoxin inhibits the chick muscle alpha-1-beta-1-gamma-delta (CHRNA1-CHRNB1-CHRNG-CHNRD) nicotinic acetylcholine receptor (nAChR) 100-fold more compared with the mouse receptor. In vivo, produces rapid flaccid paralysis, dyspnea and increased respiratory rate in geckos. At sublethal doses geckos were immobilized for up to three days and then recovered. Chicks injected with lethal doses showed rapid onset of inactivity, dyspnea and neck droop, and no extended paralysis with survival was seen. The sequence is that of Irditoxin subunit A from Boiga irregularis (Brown tree snake).